A 153-amino-acid chain; its full sequence is 3-hydroxyacyl-[acyl-carrier-protein] dehydratase FabZ (153 aa).

Residue His54 is part of the active site.

The protein belongs to the thioester dehydratase family. FabZ subfamily.

The protein resides in the cytoplasm. The enzyme catalyses a (3R)-hydroxyacyl-[ACP] = a (2E)-enoyl-[ACP] + H2O. Its function is as follows. Involved in unsaturated fatty acids biosynthesis. Catalyzes the dehydration of short chain beta-hydroxyacyl-ACPs and long chain saturated and unsaturated beta-hydroxyacyl-ACPs. The sequence is that of 3-hydroxyacyl-[acyl-carrier-protein] dehydratase FabZ from Shewanella denitrificans (strain OS217 / ATCC BAA-1090 / DSM 15013).